The chain runs to 415 residues: Gamma-glutamyl phosphate reductase (415 aa).

This sequence belongs to the gamma-glutamyl phosphate reductase family.

It is found in the cytoplasm. It carries out the reaction L-glutamate 5-semialdehyde + phosphate + NADP(+) = L-glutamyl 5-phosphate + NADPH + H(+). Its pathway is amino-acid biosynthesis; L-proline biosynthesis; L-glutamate 5-semialdehyde from L-glutamate: step 2/2. Its function is as follows. Catalyzes the NADPH-dependent reduction of L-glutamate 5-phosphate into L-glutamate 5-semialdehyde and phosphate. The product spontaneously undergoes cyclization to form 1-pyrroline-5-carboxylate. In Bacillus cereus (strain ZK / E33L), this protein is Gamma-glutamyl phosphate reductase.